The chain runs to 182 residues: T-cell surface glycoprotein CD3 gamma chain (182 aa).

Positions methionine 1–alanine 22 are cleaved as a signal peptide. Topologically, residues glutamine 23 to serine 116 are extracellular. Positions glutamine 37–serine 94 constitute an Ig-like domain. Cysteines 46 and 87 form a disulfide. Asparagine 66 carries an N-linked (GlcNAc...) asparagine glycan. The chain crosses the membrane as a helical span at residues glycine 117–alanine 137. Over glycine 138–lysine 182 the chain is Cytoplasmic. Serine 145 carries the post-translational modification Phosphoserine. Serine 148 bears the Phosphoserine; by PKC mark. Positions aspartate 149–asparagine 177 constitute an ITAM domain. The short motif at leucine 153–leucine 154 is the Di-leucine motif element.

The TCR-CD3 complex is composed of a CD3D/CD3E and a CD3G/CD3E heterodimers that preferentially associate with TCRalpha and TCRbeta, respectively, to form TCRalpha/CD3E/CD3G and TCRbeta/CD3G/CD3E trimers. In turn, the hexamer interacts with CD3Z homodimer to form the TCR-CD3 complex. Alternatively, TCRalpha and TCRbeta can be replaced by TCRgamma and TCRdelta. Post-translationally, phosphorylated on Tyr residues after T-cell receptor triggering by LCK in association with CD4/CD8. Phosphorylated also by PKC; leading to the TCR complex down-regulation. In terms of processing, phosphorylated on Tyr residues after T-cell receptor triggering by LCK in association with CD4/CD8.

The protein localises to the cell membrane. Functionally, part of the TCR-CD3 complex present on T-lymphocyte cell surface that plays an essential role in adaptive immune response. When antigen presenting cells (APCs) activate T-cell receptor (TCR), TCR-mediated signals are transmitted across the cell membrane by the CD3 chains CD3D, CD3E, CD3G and CD3Z. All CD3 chains contain immunoreceptor tyrosine-based activation motifs (ITAMs) in their cytoplasmic domain. Upon TCR engagement, these motifs become phosphorylated by Src family protein tyrosine kinases LCK and FYN, resulting in the activation of downstream signaling pathways. In addition to this role of signal transduction in T-cell activation, CD3G plays an essential role in the dynamic regulation of TCR expression at the cell surface. Indeed, constitutive TCR cycling is dependent on the di-leucine-based (diL) receptor-sorting motif present in CD3G. This chain is T-cell surface glycoprotein CD3 gamma chain (Cd3g), found in Rattus norvegicus (Rat).